Consider the following 331-residue polypeptide: Cytosolic 5'-nucleotidase 3A (331 aa).

Asp83 (nucleophile) is an active-site residue. 2 residues coordinate Mg(2+): Asp83 and Asp85. Asp85 functions as the Proton donor in the catalytic mechanism. Glu130 is a binding site for CMP. 2 residues coordinate N(7)-methyl-GMP: Glu130 and Ser151. Substrate is bound by residues 198 to 200 (SAG) and Lys247. Asp272 provides a ligand contact to Mg(2+). Ser273 is modified (phosphoserine).

This sequence belongs to the pyrimidine 5'-nucleotidase family. As to quaternary structure, monomer. In terms of tissue distribution, isoform 2 is highly expressed in the brain, heart, spleen, kidney and blood. Isoform 2 is expressed (at protein level) in the spleen, skeletal muscle and gastrointestinal epithelia.

It is found in the cytoplasm. The enzyme catalyses N(7)-methyl-GMP + H2O = N(7)-methylguanosine + phosphate. It catalyses the reaction a ribonucleoside 5'-phosphate + H2O = a ribonucleoside + phosphate. Its function is as follows. Nucleotidase which shows specific activity towards cytidine monophosphate (CMP) and 7-methylguanosine monophosphate (m(7)GMP). CMP seems to be the preferred substrate. The chain is Cytosolic 5'-nucleotidase 3A (Nt5c3a) from Mus musculus (Mouse).